We begin with the raw amino-acid sequence, 610 residues long: DNA mismatch repair protein MutL (610 aa).

Belongs to the DNA mismatch repair MutL/HexB family.

This protein is involved in the repair of mismatches in DNA. It is required for dam-dependent methyl-directed DNA mismatch repair. May act as a 'molecular matchmaker', a protein that promotes the formation of a stable complex between two or more DNA-binding proteins in an ATP-dependent manner without itself being part of a final effector complex. In Rickettsia peacockii (strain Rustic), this protein is DNA mismatch repair protein MutL.